The primary structure comprises 39 residues: Bacteriocin E50-52 (39 aa).

It localises to the secreted. In terms of biological role, bacteriocin active against the Gram-negative bacteria C.jejuni, Y.enterocolitica and Y.pseudotuberculosis, and the Gram-positive bacteria S.aureus, S.epidermidis, L.monocytogenes and Listeria spp. When added to the drinking water of chickens, causes a decrease in the levels of C.jejuni and S.enteritidis in the ceca, and in the levels of S.enteritidis in the liver and spleen. The polypeptide is Bacteriocin E50-52 (Enterococcus faecium (Streptococcus faecium)).